The chain runs to 502 residues: Calnexin homolog (502 aa).

Positions M1 to G19 are cleaved as a signal peptide. Over T20–K481 the chain is Lumenal. N-linked (GlcNAc...) asparagine glycans are attached at residues N25 and N104. A disulfide bond links C125 and C161. K131 and D159 together coordinate an alpha-D-glucoside. Residues I248 to E381 form a p domain (Extended arm) region. A run of 5 repeats spans residues D250–D261, D267–E278, H286–S297, D305–E316, and G320–P330. 2 4 X approximate repeats regions span residues D250–E316 and G320–P377. An N-linked (GlcNAc...) asparagine glycan is attached at N296. The cysteines at positions 332 and 338 are disulfide-linked. A run of 3 repeats spans residues G339 to A349, G353 to P363, and G367 to P377. An alpha-D-glucoside is bound at residue E398. Residues N416 and N425 are each glycosylated (N-linked (GlcNAc...) asparagine). Residues F482 to T502 form a helical membrane-spanning segment.

It belongs to the calreticulin family. Interacts with MPD1.

Its subcellular location is the endoplasmic reticulum membrane. Functionally, interacts with newly synthesized monoglucosylated glycoproteins in the endoplasmic reticulum. It may act in assisting protein assembly and/or in the retention within the ER of unassembled protein subunits. It seems to play a major role in the quality control apparatus of the ER by the retention of incorrectly folded proteins. In Saccharomyces cerevisiae (strain ATCC 204508 / S288c) (Baker's yeast), this protein is Calnexin homolog (CNE1).